The primary structure comprises 146 residues: SecB-like chaperone SmegB (146 aa).

It belongs to the SecB-like family.

Functionally, chaperone component of an orphan antitoxin chaperone (AC) system; there is no toxin gene in close genomic proximity. When expressed in E.coli complements the cold-sensitive phenotype of a secB deletion, suggesting it may have a generic chaperone function. Does not however complement the toxin-neutralizing effect of its M.tuberculosis paralog Rv1957 (AC P95257) in E.coli, probably because the antitoxin genes are not from the same family. The polypeptide is SecB-like chaperone SmegB (Mycolicibacterium smegmatis (strain ATCC 700084 / mc(2)155) (Mycobacterium smegmatis)).